We begin with the raw amino-acid sequence, 121 residues long: Small ribosomal subunit protein uS13 (121 aa).

The interval 95-121 (LPVRGQNTKNNARTRKGKAVAIAGKKK) is disordered. The segment covering 106–121 (ARTRKGKAVAIAGKKK) has biased composition (basic residues).

This sequence belongs to the universal ribosomal protein uS13 family. In terms of assembly, part of the 30S ribosomal subunit. Forms a loose heterodimer with protein S19. Forms two bridges to the 50S subunit in the 70S ribosome.

Located at the top of the head of the 30S subunit, it contacts several helices of the 16S rRNA. In the 70S ribosome it contacts the 23S rRNA (bridge B1a) and protein L5 of the 50S subunit (bridge B1b), connecting the 2 subunits; these bridges are implicated in subunit movement. Contacts the tRNAs in the A and P-sites. This is Small ribosomal subunit protein uS13 from Streptococcus thermophilus (strain CNRZ 1066).